Reading from the N-terminus, the 346-residue chain is NADH-ubiquinone oxidoreductase chain 2 (346 aa).

Helical transmembrane passes span 7 to 27, 59 to 79, 93 to 115, 151 to 171, 178 to 198, 200 to 220, 242 to 262, 275 to 294, and 325 to 345; these read AIIT…NHWI, YFLT…MNMW, ISCT…HFWF, TTLL…GGLN, IMAF…TLSP, ILLL…LMIN, TMML…GFAP, LSMF…YFYL, and LATI…LKAI.

Belongs to the complex I subunit 2 family.

The protein resides in the mitochondrion inner membrane. It catalyses the reaction a ubiquinone + NADH + 5 H(+)(in) = a ubiquinol + NAD(+) + 4 H(+)(out). Its function is as follows. Core subunit of the mitochondrial membrane respiratory chain NADH dehydrogenase (Complex I) that is believed to belong to the minimal assembly required for catalysis. Complex I functions in the transfer of electrons from NADH to the respiratory chain. The immediate electron acceptor for the enzyme is believed to be ubiquinone. In Pelomedusa subrufa (African side-necked turtle), this protein is NADH-ubiquinone oxidoreductase chain 2 (MT-ND2).